Reading from the N-terminus, the 332-residue chain is DNA repair and recombination protein RadA (332 aa).

126–133 (GEFGSGKT) is an ATP binding site.

The protein belongs to the eukaryotic RecA-like protein family.

In terms of biological role, involved in DNA repair and in homologous recombination. Binds and assemble on single-stranded DNA to form a nucleoprotein filament. Hydrolyzes ATP in a ssDNA-dependent manner and promotes DNA strand exchange between homologous DNA molecules. This Pyrobaculum calidifontis (strain DSM 21063 / JCM 11548 / VA1) protein is DNA repair and recombination protein RadA.